Here is a 253-residue protein sequence, read N- to C-terminus: Phycobilisome rod-core linker polypeptide CpcG4 (253 aa).

The region spanning 11-191 (SSQNHRVTSF…DFQEKAGTVQ (181 aa)) is the PBS-linker domain.

This sequence belongs to the phycobilisome linker protein family. Part of the phycobilisome, a hemidiscoidal structure that is composed of two distinct substructures: a core complex and a number of rods radiating from the core.

It localises to the cellular thylakoid membrane. Rod-core linker protein required for attachment of phycocyanin to allophycocyanin in cores of phycobilisomes. Its function is as follows. Linker polypeptides determine the state of aggregation and the location of the disk-shaped phycobiliprotein units within the phycobilisome and modulate their spectroscopic properties in order to mediate a directed and optimal energy transfer. This is Phycobilisome rod-core linker polypeptide CpcG4 from Nostoc sp. (strain PCC 7120 / SAG 25.82 / UTEX 2576).